A 109-amino-acid chain; its full sequence is Spermidine export protein MdtI (109 aa).

The next 4 helical transmembrane spans lie at 6 to 26, 36 to 56, 63 to 83, and 88 to 108; these read WWHAAFLFLAVVLDILANILL, WMGILSLIAVLGAFSALAQAV, IAYALWGAFGIIATVAAGWIM, and LNYKGWGGIALLLLGMVMIKM.

Belongs to the drug/metabolite transporter (DMT) superfamily. Small multidrug resistance (SMR) (TC 2.A.7.1) family. MdtI subfamily. In terms of assembly, forms a complex with MdtJ.

The protein resides in the cell inner membrane. Catalyzes the excretion of spermidine. In Photorhabdus laumondii subsp. laumondii (strain DSM 15139 / CIP 105565 / TT01) (Photorhabdus luminescens subsp. laumondii), this protein is Spermidine export protein MdtI.